Here is a 141-residue protein sequence, read N- to C-terminus: Hemoglobin subunit alpha (141 aa).

One can recognise a Globin domain in the interval 1–141 (VLSAADKSNV…VSTVLTSKYR (141 aa)). A Phosphoserine modification is found at S3. K7 and K11 each carry N6-succinyllysine. K16 bears the N6-acetyllysine; alternate mark. K16 carries the post-translational modification N6-succinyllysine; alternate. Y24 is subject to Phosphotyrosine. At S35 the chain carries Phosphoserine. K40 carries the post-translational modification N6-succinyllysine. S49 carries the phosphoserine modification. H58 is an O2 binding site. H87 is a heme b binding site. Residue S102 is modified to Phosphoserine. A Phosphothreonine modification is found at T108. Phosphoserine is present on S124. Phosphothreonine occurs at positions 134 and 137. S138 is subject to Phosphoserine.

Belongs to the globin family. In terms of assembly, heterotetramer of two alpha chains and two beta chains. In terms of tissue distribution, red blood cells.

Functionally, involved in oxygen transport from the lung to the various peripheral tissues. Hemopressin acts as an antagonist peptide of the cannabinoid receptor CNR1. Hemopressin-binding efficiently blocks cannabinoid receptor CNR1 and subsequent signaling. In Felis catus (Cat), this protein is Hemoglobin subunit alpha (HBA).